The sequence spans 123 residues: uncharacterized protein (123 aa).

The tract at residues 1-24 is disordered; that stretch reads MGGGGPPARVQGTEGSQTGGGAVA.

This is an uncharacterized protein from Halorubrum pleomorphic virus 1 (HRPV-1).